The following is a 281-amino-acid chain: MTGESGSAAPSIALNDENTMPVLGLGVAELSDDETERAVSAALEVGCRLIDTAAAYGNEAAVGRAIAASGIPRAELFVTTKLATSDQGFKGAMDACEASLERLGLDYVDLYLIHWPAPALGTYVNSFGGMIQSRGNGHARSIGVSNFTEEYLTTVIDLTFVTPAVNQIELHPLLNQEALRKTNAEHNVVTQSYTPLALGKLNDHPTVNSVAAEYGKTASQVLLRWNLQLSNAVIFRSANAEHIASDFDVFDFELAAEHMDAINALNDGTRLRPDPDTYEGS.

The active-site Proton donor is Tyr-56. NADPH-binding residues include Leu-196, Ile-234, Arg-236, Ser-237, Ala-238, Ser-245, and Arg-272.

The protein belongs to the aldo/keto reductase family.

This is Aldo-keto reductase MAP_3007 from Mycolicibacterium paratuberculosis (strain ATCC BAA-968 / K-10) (Mycobacterium paratuberculosis).